Reading from the N-terminus, the 171-residue chain is Xanthine-guanine phosphoribosyltransferase (171 aa).

5-phospho-alpha-D-ribose 1-diphosphate is bound by residues 51 to 52 (RG) and 106 to 114 (DDLVDSGKT). Asp-107 is a binding site for Mg(2+). Asp-110 and Ile-153 together coordinate guanine. The xanthine site is built by Asp-110 and Ile-153. Residues 110–114 (DSGKT) and 152–153 (WI) contribute to the GMP site.

This sequence belongs to the purine/pyrimidine phosphoribosyltransferase family. XGPT subfamily. Homotetramer. Mg(2+) serves as cofactor.

Its subcellular location is the cell inner membrane. It carries out the reaction GMP + diphosphate = guanine + 5-phospho-alpha-D-ribose 1-diphosphate. It catalyses the reaction XMP + diphosphate = xanthine + 5-phospho-alpha-D-ribose 1-diphosphate. The enzyme catalyses IMP + diphosphate = hypoxanthine + 5-phospho-alpha-D-ribose 1-diphosphate. It participates in purine metabolism; GMP biosynthesis via salvage pathway; GMP from guanine: step 1/1. Its pathway is purine metabolism; XMP biosynthesis via salvage pathway; XMP from xanthine: step 1/1. Purine salvage pathway enzyme that catalyzes the transfer of the ribosyl-5-phosphate group from 5-phospho-alpha-D-ribose 1-diphosphate (PRPP) to the N9 position of the 6-oxopurines guanine and xanthine to form the corresponding ribonucleotides GMP (guanosine 5'-monophosphate) and XMP (xanthosine 5'-monophosphate), with the release of PPi. To a lesser extent, also acts on hypoxanthine. The chain is Xanthine-guanine phosphoribosyltransferase from Ruegeria pomeroyi (strain ATCC 700808 / DSM 15171 / DSS-3) (Silicibacter pomeroyi).